The following is a 338-amino-acid chain: Phenylalanine--tRNA ligase alpha subunit (338 aa).

Residue Glu252 coordinates Mg(2+).

Belongs to the class-II aminoacyl-tRNA synthetase family. Phe-tRNA synthetase alpha subunit type 1 subfamily. In terms of assembly, tetramer of two alpha and two beta subunits. Mg(2+) serves as cofactor.

Its subcellular location is the cytoplasm. The enzyme catalyses tRNA(Phe) + L-phenylalanine + ATP = L-phenylalanyl-tRNA(Phe) + AMP + diphosphate + H(+). This Pseudomonas fluorescens (strain ATCC BAA-477 / NRRL B-23932 / Pf-5) protein is Phenylalanine--tRNA ligase alpha subunit.